Here is a 358-residue protein sequence, read N- to C-terminus: MFKMVSSPHTHSGKLTAHIMLWVILAMMPAFFTQIYYFGFGVVLQSALAIGTAIIAEFIAIKLRGKKPLNYLSDFSVALTALILAMAIPPYAPYWIIIIGTLCAVLLGKQVYGGLGQNPFNPAMIGYVILLISFPLQMTTWMPPINLLQEPPTFSDTFSLIFSGLTTDGFTLSQLTHNIDGITQATPLDSAKIFYKSHNQLSDFYELIKLPIFMGNGTDFAQGWWQINVAFLAGGIFLILKRIIHWQIPVAMLVTFFCLATATAFTGFTHLSAISQLVSGAMMFGAFFIATDPVTASITPRGKIIFGALVGLFVYLIRYHGNYPDGVAFAILLSNICVPLIDHYTRPRVSGYPTKGRK.

Helical transmembrane passes span 19–39, 41–61, 79–99, and 125–145; these read IMLWVILAMMPAFFTQIYYFG, GVVLQSALAIGTAIIAEFIAI, LTALILAMAIPPYAPYWIIII, and IGYVILLISFPLQMTTWMPPI. Thr-186 carries the post-translational modification FMN phosphoryl threonine. Transmembrane regions (helical) follow at residues 220–240, 248–268, 271–291, 297–317, and 321–341; these read FAQGWWQINVAFLAGGIFLIL, IPVAMLVTFFCLATATAFTGF, LSAISQLVSGAMMFGAFFIAT, SITPRGKIIFGALVGLFVYLI, and GNYPDGVAFAILLSNICVPLI.

Belongs to the NqrB/RnfD family. In terms of assembly, the complex is composed of six subunits: RnfA, RnfB, RnfC, RnfD, RnfE and RnfG. FMN is required as a cofactor.

Its subcellular location is the cell inner membrane. Part of a membrane-bound complex that couples electron transfer with translocation of ions across the membrane. The chain is Ion-translocating oxidoreductase complex subunit D from Haemophilus influenzae (strain 86-028NP).